The primary structure comprises 84 residues: MKTLLLTLVVVTIVCLDLGYTLKCYVGRKPYKLITCPEGSKKCATVPLPTRPLPIFSKGCYTSCPSQYVKCCSTDLCNGSPTSG.

The N-terminal stretch at 1–21 (MKTLLLTLVVVTIVCLDLGYT) is a signal peptide. 4 disulfides stabilise this stretch: Cys-24-Cys-43, Cys-36-Cys-60, Cys-64-Cys-71, and Cys-72-Cys-77.

Belongs to the three-finger toxin family. Short-chain subfamily. Expressed by the venom gland.

The protein resides in the secreted. This is Three-finger toxin MALT0070C from Micrurus altirostris (Uruguayan coral snake).